A 214-amino-acid polypeptide reads, in one-letter code: Ubiquitin-conjugating enzyme E2 21 (214 aa).

A UBC core domain is found at 21–168 (ARVTRKCKEV…AVYWTSYFAN (148 aa)). Cysteine 106 serves as the catalytic Glycyl thioester intermediate. Residues 172 to 214 (DVEPDFNRKVGRLIEMGIRETEAIVYLSCNNWKLEQALQFIFD) enclose the UBA domain.

It belongs to the ubiquitin-conjugating enzyme family.

The catalysed reaction is S-ubiquitinyl-[E1 ubiquitin-activating enzyme]-L-cysteine + [E2 ubiquitin-conjugating enzyme]-L-cysteine = [E1 ubiquitin-activating enzyme]-L-cysteine + S-ubiquitinyl-[E2 ubiquitin-conjugating enzyme]-L-cysteine.. The protein operates within protein modification; protein ubiquitination. Acts with E3 ubiquitin-protein ligase trim-21 to catalyze the 'Lys-48'-linked polyubiquitination of ced-1, promoting its proteasomal degradation to maintain appropriate ced-1 levels for apoptotic cell clearance. This Caenorhabditis elegans protein is Ubiquitin-conjugating enzyme E2 21 (ubc-21).